Consider the following 224-residue polypeptide: Ribonuclease HII (224 aa).

The 203-residue stretch at 21–223 folds into the RNase H type-2 domain; that stretch reads RAIAGIDEAG…IRNAALEGEQ (203 aa). Positions 27, 28, and 124 each coordinate a divalent metal cation.

Belongs to the RNase HII family. The cofactor is Mn(2+). Requires Mg(2+) as cofactor.

It localises to the cytoplasm. It catalyses the reaction Endonucleolytic cleavage to 5'-phosphomonoester.. Its function is as follows. Endonuclease that specifically degrades the RNA of RNA-DNA hybrids. The sequence is that of Ribonuclease HII from Roseiflexus castenholzii (strain DSM 13941 / HLO8).